A 431-amino-acid polypeptide reads, in one-letter code: Glutamate-1-semialdehyde 2,1-aminomutase 2 (431 aa).

N6-(pyridoxal phosphate)lysine is present on K268.

This sequence belongs to the class-III pyridoxal-phosphate-dependent aminotransferase family. HemL subfamily. In terms of assembly, homodimer. It depends on pyridoxal 5'-phosphate as a cofactor.

The protein resides in the cytoplasm. It catalyses the reaction (S)-4-amino-5-oxopentanoate = 5-aminolevulinate. Its pathway is porphyrin-containing compound metabolism; protoporphyrin-IX biosynthesis; 5-aminolevulinate from L-glutamyl-tRNA(Glu): step 2/2. This chain is Glutamate-1-semialdehyde 2,1-aminomutase 2, found in Anoxybacillus flavithermus (strain DSM 21510 / WK1).